Reading from the N-terminus, the 1204-residue chain is Cingulin (1204 aa).

Residues 7–359 are head; the sequence is MAEPRGPVDH…VMMSSGSSKA (353 aa). The disordered stretch occupies residues 25-48; that stretch reads EPVSGAEMGTLRRGGRRPAKDARA. The ZIM signature appears at 48 to 62; that stretch reads ASTYGVAVRVQGIAG. Residues 54–67 are interaction with TJP1/ZO1; that stretch reads AVRVQGIAGQPFVV. The tract at residues 68-269 is disordered; it reads LNSGEKGGDS…SPLSGLSRAR (202 aa). Residues S95, S96, S98, S135, S137, S140, S155, and S165 each carry the phosphoserine modification. Residues 126–140 show a composition bias toward polar residues; that stretch reads TQWNGKLLRSQSQAS. Positions 166–190 are enriched in polar residues; sequence PGSTIDTAPLSSVDSLINKFDSQLR. Residues 207 to 231 show a composition bias toward basic and acidic residues; the sequence is EQRKRSKSLDSRLPRDTLEERERQS. Phosphoserine is present on residues S214, S217, S260, S278, S340, and S353. A coiled-coil region spans residues 360 to 1161; that stretch reads VAGQGELTRK…SLEKDSWRKA (802 aa). K581 is modified (N6-acetyllysine). The segment at 1156–1182 is disordered; the sequence is DSWRKASRSAAESTLKHEGLSSDEEFD. The tract at residues 1162–1204 is tail; it reads SRSAAESTLKHEGLSSDEEFDGVYDPSSIASLLTESNLQTSSC. Phosphoserine occurs at positions 1176 and 1177.

The protein belongs to the cingulin family. As to quaternary structure, homodimer. Interacts with TJP1/ZO1 and SPEF1.

The protein localises to the cell junction. It is found in the tight junction. Functionally, probably plays a role in the formation and regulation of the tight junction (TJ) paracellular permeability barrier. The polypeptide is Cingulin (Callithrix jacchus (White-tufted-ear marmoset)).